A 627-amino-acid polypeptide reads, in one-letter code: E3 ubiquitin-protein ligase DTX1 (627 aa).

WWE domains lie at 14-94 (GLGF…PVRR) and 95-171 (NFYD…RLRR). Disordered stretches follow at residues 222 to 254 (QRRK…ALVV), 269 to 327 (PATG…ALPV), and 368 to 398 (PPVS…KSKN). 2 stretches are compositionally biased toward pro residues: residues 230–248 (PAAP…PGGP) and 275–287 (EPAP…PRSP). The SH3-binding motif lies at 240–243 (PPPL). Positions 296 to 314 (PGQNNLSRPGPQRSTSVSA) are enriched in polar residues. A compositionally biased stretch (basic residues) spans 386–396 (RKTKKKHLKKS). The RING-type zinc finger occupies 418–479 (CTICMERLVT…DGSLQCPTCK (62 aa)).

It belongs to the Deltex family. In terms of assembly, homodimer. May form a heterodimer with other members of the Deltex family. Interacts with NOTCH1 via its N-terminal region and EIF3F, the interaction is required for NOTCH1 deubiquitination. Interacts with EP300. Forms a heterodimer with BBAP; the heterodimerization leading to an increase of in vitro ubiquitin ligase activity. Interacts with ITCH. In terms of processing, ubiquitinated; undergoes 'Lys-29'-linked polyubiquitination catalyzed by ITCH. Predominantly expressed in the brain and testis. Weakly expressed in the thymus, spleen and ovary. Predominantly expressed in regions containing post-mitotic differentiating neurons.

Its subcellular location is the cytoplasm. The protein localises to the nucleus. The catalysed reaction is S-ubiquitinyl-[E2 ubiquitin-conjugating enzyme]-L-cysteine + [acceptor protein]-L-lysine = [E2 ubiquitin-conjugating enzyme]-L-cysteine + N(6)-ubiquitinyl-[acceptor protein]-L-lysine.. Its pathway is protein modification; protein ubiquitination. Regulator of Notch signaling, a signaling pathway involved in cell-cell communications that regulates a broad spectrum of cell-fate determinations. Mainly acts as a positive regulator of Notch, but it also acts as a negative regulator, depending on the developmental and cell context. Mediates the antineural activity of Notch, possibly by inhibiting the transcriptional activation mediated by MATCH1. Involved in neurogenesis, lymphogenesis and myogenesis, and may also be involved in MZB (Marginal zone B) cell differentiation. Promotes B-cell development at the expense of T-cell development, suggesting that it can antagonize NOTCH1. Functions as an ubiquitin ligase protein in vivo, mediating ubiquitination and promoting degradation of MEKK1, suggesting that it may regulate the Notch pathway via some ubiquitin ligase activity. The protein is E3 ubiquitin-protein ligase DTX1 (Dtx1) of Mus musculus (Mouse).